The following is a 526-amino-acid chain: Glucose-6-phosphate isomerase (526 aa).

The active-site Proton donor is the E320. Active-site residues include H349 and K453.

The protein belongs to the GPI family.

The protein localises to the cytoplasm. It catalyses the reaction alpha-D-glucose 6-phosphate = beta-D-fructose 6-phosphate. It participates in carbohydrate biosynthesis; gluconeogenesis. Its pathway is carbohydrate degradation; glycolysis; D-glyceraldehyde 3-phosphate and glycerone phosphate from D-glucose: step 2/4. Functionally, catalyzes the reversible isomerization of glucose-6-phosphate to fructose-6-phosphate. The protein is Glucose-6-phosphate isomerase of Gloeothece citriformis (strain PCC 7424) (Cyanothece sp. (strain PCC 7424)).